Reading from the N-terminus, the 379-residue chain is Glutamate 5-kinase (379 aa).

Residue Lys-19 coordinates ATP. Substrate contacts are provided by Ser-59, Asp-146, and Asn-158. ATP-binding positions include 178-179 and 220-226; these read TD and TGGMATK. One can recognise a PUA domain in the interval 285–363; that stretch reads SGDIVIDQGA…KDIISILGYD (79 aa).

Belongs to the glutamate 5-kinase family.

The protein resides in the cytoplasm. The enzyme catalyses L-glutamate + ATP = L-glutamyl 5-phosphate + ADP. It participates in amino-acid biosynthesis; L-proline biosynthesis; L-glutamate 5-semialdehyde from L-glutamate: step 1/2. Its function is as follows. Catalyzes the transfer of a phosphate group to glutamate to form L-glutamate 5-phosphate. This is Glutamate 5-kinase from Vibrio vulnificus (strain YJ016).